Consider the following 150-residue polypeptide: Translation machinery-associated protein 17 (150 aa).

2 positions are modified to phosphoserine: Ser24 and Ser68. The tract at residues Arg110–Asn139 is disordered. The span at Lys118–Thr127 shows a compositional bias: basic and acidic residues.

As to quaternary structure, interacts with RPT6. Interacts with the 40S and 60S ribosomal subunits.

It is found in the cytoplasm. The protein localises to the nucleus. Functionally, ATPase-dedicated chaperone that assists the formation of the RPT6-RPT3 ATPase pair, an early step in proteasome assembly. Plays a key role in maintaining homeostatic proteasome levels and adjusting proteasome assembly when demands increase, such as during proteasome stresses. Function overlaps with RPN14. The protein is Translation machinery-associated protein 17 (TMA17) of Saccharomyces cerevisiae (strain ATCC 204508 / S288c) (Baker's yeast).